An 85-amino-acid chain; its full sequence is UPF0298 protein SUB0431 (85 aa).

It belongs to the UPF0298 family.

Its subcellular location is the cytoplasm. The polypeptide is UPF0298 protein SUB0431 (Streptococcus uberis (strain ATCC BAA-854 / 0140J)).